Reading from the N-terminus, the 122-residue chain is Large ribosomal subunit protein uL14 (122 aa).

Belongs to the universal ribosomal protein uL14 family. As to quaternary structure, part of the 50S ribosomal subunit. Forms a cluster with proteins L3 and L19. In the 70S ribosome, L14 and L19 interact and together make contacts with the 16S rRNA in bridges B5 and B8.

Its function is as follows. Binds to 23S rRNA. Forms part of two intersubunit bridges in the 70S ribosome. The sequence is that of Large ribosomal subunit protein uL14 from Bacillus licheniformis (strain ATCC 14580 / DSM 13 / JCM 2505 / CCUG 7422 / NBRC 12200 / NCIMB 9375 / NCTC 10341 / NRRL NRS-1264 / Gibson 46).